The primary structure comprises 70 residues: Large ribosomal subunit protein bL31 (70 aa).

Zn(2+)-binding residues include Cys16, Cys18, Cys37, and Cys40.

The protein belongs to the bacterial ribosomal protein bL31 family. Type A subfamily. As to quaternary structure, part of the 50S ribosomal subunit. Requires Zn(2+) as cofactor.

In terms of biological role, binds the 23S rRNA. The chain is Large ribosomal subunit protein bL31 from Haemophilus ducreyi (strain 35000HP / ATCC 700724).